Consider the following 258-residue polypeptide: Cruciform cutting endonuclease 1, mitochondrial (258 aa).

The 35-residue stretch at 1–35 (MATVKLSFLQHICKLTGLSRSGRKDELLRRIVDSP) folds into the SAP domain. 2 residues coordinate Mg(2+): Asp-46 and Asp-230.

As to quaternary structure, homodimer.

The protein localises to the mitochondrion. It carries out the reaction Endonucleolytic cleavage at a junction such as a reciprocal single-stranded crossover between two homologous DNA duplexes (Holliday junction).. Functionally, capable of resolving Holliday junctions. Specific for 4-way junctions. Seems to be important for the maintenance of mitochondrial DNA. Cleaves fixed junctions at the point of strand exchange. Cleaves after 5'-CT-3' and 5'-TT-3' sequences. This Schizosaccharomyces pombe (strain 972 / ATCC 24843) (Fission yeast) protein is Cruciform cutting endonuclease 1, mitochondrial (cce1).